Reading from the N-terminus, the 152-residue chain is MSLNQLQLSLQFARFAEAPVHRAVLSRSKVTRWIRHALAVDAEITVRIVDAEEGQQLNREYRQKDYATNVLTFDYQQEPTAMADLVLCAPVVEREAREQNKTLEEHYAHLLVHGTLHAQGWDHETSEQDAEEMEAYETEIMVELGFADPYAK.

Zn(2+) is bound by residues H113, H117, and H123.

Belongs to the endoribonuclease YbeY family. Requires Zn(2+) as cofactor.

The protein localises to the cytoplasm. Its function is as follows. Single strand-specific metallo-endoribonuclease involved in late-stage 70S ribosome quality control and in maturation of the 3' terminus of the 16S rRNA. In Delftia acidovorans (strain DSM 14801 / SPH-1), this protein is Endoribonuclease YbeY.